The following is a 449-amino-acid chain: Intestinal acid phosphatase (449 aa).

The N-terminal stretch at 1–19 (MVSAISIVAIFALEGFVTT) is a signal peptide. Over 20 to 428 (YSDGTKDLVF…TDLNKSSSFA (409 aa)) the chain is Extracellular. H36 (nucleophile) is an active-site residue. The active-site Proton donor is D321. Residues 429–449 (TVSMLFIAAILAINNNFLGLF) traverse the membrane as a helical segment.

The protein belongs to the histidine acid phosphatase family. In terms of assembly, homodimer. Post-translationally, the N-terminus is blocked. In terms of tissue distribution, expressed in the intestine, specifically on the edge of the gut lumen, in the 14 posterior cells of the intestine.

The protein localises to the membrane. The catalysed reaction is a phosphate monoester + H2O = an alcohol + phosphate. Its function is as follows. Acid phosphatase required for normal growth and development. Specifically required for normal gut differentiation. This chain is Intestinal acid phosphatase, found in Caenorhabditis elegans.